We begin with the raw amino-acid sequence, 358 residues long: Aminomethyltransferase (358 aa).

This sequence belongs to the GcvT family. As to quaternary structure, the glycine cleavage system is composed of four proteins: P, T, L and H.

The enzyme catalyses N(6)-[(R)-S(8)-aminomethyldihydrolipoyl]-L-lysyl-[protein] + (6S)-5,6,7,8-tetrahydrofolate = N(6)-[(R)-dihydrolipoyl]-L-lysyl-[protein] + (6R)-5,10-methylene-5,6,7,8-tetrahydrofolate + NH4(+). The glycine cleavage system catalyzes the degradation of glycine. The sequence is that of Aminomethyltransferase from Francisella philomiragia subsp. philomiragia (strain ATCC 25017 / CCUG 19701 / FSC 153 / O#319-036).